We begin with the raw amino-acid sequence, 118 residues long: UPF0102 protein STH1475 (118 aa).

The protein belongs to the UPF0102 family.

This is UPF0102 protein STH1475 from Symbiobacterium thermophilum (strain DSM 24528 / JCM 14929 / IAM 14863 / T).